Consider the following 108-residue polypeptide: Ig kappa chain V-V region HP 124E1 (108 aa).

The interval 1 to 23 (DIQMTQTTSSLSASLGDRVTISC) is framework-1. An intrachain disulfide couples Cys23 to Cys88. The segment at 24–34 (RASQDINNYLN) is complementarity-determining-1. The interval 35–49 (WYQQKPDGTVKLLIY) is framework-2. Residues 50 to 56 (YTSRLHS) form a complementarity-determining-2 region. The tract at residues 57–88 (GVPSRFSGSGSGTDYSLTISNLEQEDIATYFC) is framework-3. Residues 89–97 (QQGKTLPRT) form a complementarity-determining-3 region. The interval 98–108 (FGGGTKLEIKR) is framework-4.

This Mus musculus (Mouse) protein is Ig kappa chain V-V region HP 124E1.